Reading from the N-terminus, the 329-residue chain is Carrier protein YMC2, mitochondrial (329 aa).

A disordered region spans residues 1–27 (MSEEFPTPQLLDELEDQQKVTTPNEKR). Residues 1 to 33 (MSEEFPTPQLLDELEDQQKVTTPNEKRELSSNR) constitute a mitochondrion transit peptide. Solcar repeat units lie at residues 34 to 115 (VLKD…MKRF), 143 to 226 (SQYY…LVAR), and 238 to 325 (PPWK…VMRF). The next 6 membrane-spanning stretches (helical) occupy residues 38-58 (IFAG…FDTT), 84-104 (VFAF…CVSV), 140-160 (LPLS…SFLA), 205-225 (TMIR…ALVA), 243-263 (CLFG…LDVV), and 297-318 (FFKG…TFLT).

The protein belongs to the mitochondrial carrier (TC 2.A.29) family.

The protein resides in the mitochondrion inner membrane. This is Carrier protein YMC2, mitochondrial (YMC2) from Saccharomyces cerevisiae (strain ATCC 204508 / S288c) (Baker's yeast).